The following is a 428-amino-acid chain: Phosphomethylpyrimidine synthase 2 (428 aa).

Substrate contacts are provided by residues N65, M94, Y123, H158, 180–182 (SRG), 221–224 (DGMR), and E260. Residue H264 coordinates Zn(2+). Substrate is bound at residue Y287. H328 is a binding site for Zn(2+). [4Fe-4S] cluster is bound by residues C405, C408, and C412.

Belongs to the ThiC family. It depends on [4Fe-4S] cluster as a cofactor.

It catalyses the reaction 5-amino-1-(5-phospho-beta-D-ribosyl)imidazole + S-adenosyl-L-methionine = 4-amino-2-methyl-5-(phosphooxymethyl)pyrimidine + CO + 5'-deoxyadenosine + formate + L-methionine + 3 H(+). It participates in cofactor biosynthesis; thiamine diphosphate biosynthesis. Functionally, catalyzes the synthesis of the hydroxymethylpyrimidine phosphate (HMP-P) moiety of thiamine from aminoimidazole ribotide (AIR) in a radical S-adenosyl-L-methionine (SAM)-dependent reaction. The protein is Phosphomethylpyrimidine synthase 2 of Methanosarcina barkeri (strain Fusaro / DSM 804).